Here is a 51-residue protein sequence, read N- to C-terminus: uncharacterized protein (51 aa).

The helical transmembrane segment at 20–42 threads the bilayer; that stretch reads NFFSRMWNAVVFGFGAAIGASVA.

The protein localises to the membrane. This is an uncharacterized protein from Schizosaccharomyces pombe (strain 972 / ATCC 24843) (Fission yeast).